A 50-amino-acid polypeptide reads, in one-letter code: Large ribosomal subunit protein eL39 (50 aa).

Belongs to the eukaryotic ribosomal protein eL39 family.

This chain is Large ribosomal subunit protein eL39, found in Methanoculleus marisnigri (strain ATCC 35101 / DSM 1498 / JR1).